The primary structure comprises 156 residues: Small ribosomal subunit protein uS7 (156 aa).

Belongs to the universal ribosomal protein uS7 family. As to quaternary structure, part of the 30S ribosomal subunit. Contacts proteins S9 and S11.

In terms of biological role, one of the primary rRNA binding proteins, it binds directly to 16S rRNA where it nucleates assembly of the head domain of the 30S subunit. Is located at the subunit interface close to the decoding center, probably blocks exit of the E-site tRNA. The protein is Small ribosomal subunit protein uS7 of Saccharophagus degradans (strain 2-40 / ATCC 43961 / DSM 17024).